A 386-amino-acid chain; its full sequence is Putative 8-amino-7-oxononanoate synthase (386 aa).

Substrate is bound at residue Arg22. 109 to 110 (GY) is a pyridoxal 5'-phosphate binding site. Residue His134 participates in substrate binding. Pyridoxal 5'-phosphate contacts are provided by residues Ser182, 207–210 (DEAH), and 238–241 (TLSK). Lys241 is modified (N6-(pyridoxal phosphate)lysine). Thr356 lines the substrate pocket.

Belongs to the class-II pyridoxal-phosphate-dependent aminotransferase family. BioF subfamily. Homodimer. Requires pyridoxal 5'-phosphate as cofactor.

The catalysed reaction is 6-carboxyhexanoyl-[ACP] + L-alanine + H(+) = (8S)-8-amino-7-oxononanoate + holo-[ACP] + CO2. Its pathway is cofactor biosynthesis; biotin biosynthesis. In terms of biological role, catalyzes the decarboxylative condensation of pimeloyl-[acyl-carrier protein] and L-alanine to produce 8-amino-7-oxononanoate (AON), [acyl-carrier protein], and carbon dioxide. This chain is Putative 8-amino-7-oxononanoate synthase (bioF), found in Trichormus variabilis (strain ATCC 29413 / PCC 7937) (Anabaena variabilis).